A 574-amino-acid polypeptide reads, in one-letter code: Ankyrin repeat protein B18 (574 aa).

ANK repeat units follow at residues 56-87 (TGYT…DVTI), 135-164 (IKSR…DPNF), 167-213 (DGYT…NLNA), 217-249 (CGNT…NFEI), 253-285 (HGLT…NVGE), and 327-356 (EGKT…DINA). In terms of domain architecture, F-box spans 541 to 574 (KCLLTLLPSEIIYEILYMLTIYDLYNISYPPTKV).

This is Ankyrin repeat protein B18 from Variola virus (isolate Human/India/Ind3/1967) (VARV).